The sequence spans 113 residues: Hydrogenase maturation factor HypA (113 aa).

His2 contacts Ni(2+). The Zn(2+) site is built by Cys73, Cys76, Cys89, and Cys92.

Belongs to the HypA/HybF family.

In terms of biological role, involved in the maturation of [NiFe] hydrogenases. Required for nickel insertion into the metal center of the hydrogenase. This chain is Hydrogenase maturation factor HypA, found in Beijerinckia indica subsp. indica (strain ATCC 9039 / DSM 1715 / NCIMB 8712).